A 72-amino-acid chain; its full sequence is Prokaryotic ubiquitin-like protein Pup (72 aa).

Over residues 1–11 (MAQRDTGGGQQ) the composition is skewed to gly residues. A disordered region spans residues 1–41 (MAQRDTGGGQQRTGRRDDETAEAEVEESGASDLKERHEKLS). Positions 19-29 (ETAEAEVEESG) are enriched in acidic residues. A coiled-coil region spans residues 22–61 (EAEVEESGASDLKERHEKLSEDVDSLLDEIDDVLEENAEE). An ARC ATPase binding region spans residues 28 to 66 (SGASDLKERHEKLSEDVDSLLDEIDDVLEENAEEFVKGY). The segment covering 32 to 41 (DLKERHEKLS) has biased composition (basic and acidic residues). Gln-72 is subject to Deamidated glutamine. An Isoglutamyl lysine isopeptide (Gln-Lys) (interchain with K-? in acceptor proteins) cross-link involves residue Gln-72.

Belongs to the prokaryotic ubiquitin-like protein family. Strongly interacts with the proteasome-associated ATPase ARC through a hydrophobic interface; the interacting region of Pup lies in its C-terminal half. There is one Pup binding site per ARC hexamer ring. In terms of processing, is modified by deamidation of its C-terminal glutamine to glutamate by the deamidase Dop, a prerequisite to the subsequent pupylation process.

It functions in the pathway protein degradation; proteasomal Pup-dependent pathway. In terms of biological role, protein modifier that is covalently attached to lysine residues of substrate proteins, thereby targeting them for proteasomal degradation. The tagging system is termed pupylation. The protein is Prokaryotic ubiquitin-like protein Pup of Parafrankia sp. (strain EAN1pec).